The primary structure comprises 101 residues: Small ribosomal subunit protein uS14 (101 aa).

This sequence belongs to the universal ribosomal protein uS14 family. As to quaternary structure, part of the 30S ribosomal subunit. Contacts proteins S3 and S10.

Binds 16S rRNA, required for the assembly of 30S particles and may also be responsible for determining the conformation of the 16S rRNA at the A site. The protein is Small ribosomal subunit protein uS14 of Rhizorhabdus wittichii (strain DSM 6014 / CCUG 31198 / JCM 15750 / NBRC 105917 / EY 4224 / RW1) (Sphingomonas wittichii).